A 368-amino-acid polypeptide reads, in one-letter code: MHENFDKRLEVLLEGLALTRRSLDPEGKENELKELEQQAVQDGFWDDVARAGKISERIARLKQQLSEFNELKNKVSTIQFFLEDEESSKDLEMQKELEKEFVFCEKKITEWETLRLLSGELDRNSCFLSINAGAGGTESCDWVEMVLRMYMRWASSHSWRVEVIDRLDGEVAGIKHITLKLVGEYAYGYAKAESGVHRLVRISPFDSNAKRHTSFASVEVFPEIDDKIEVEIHPGDIRIDTYRSSGAGGQHVNVTDSAVRITHFPTGIVVSCQNERSQIQNREACMNMLRARIYQKLLQERLEKQNIDRKNKKEISWGSQIRNYVFQPYTLVKDVRTGYEVGNIQAMMDGELLDAFIKAYLVDYGEIT.

Q250 carries the post-translational modification N5-methylglutamine.

Belongs to the prokaryotic/mitochondrial release factor family. Methylated by PrmC. Methylation increases the termination efficiency of RF2.

It localises to the cytoplasm. Peptide chain release factor 2 directs the termination of translation in response to the peptide chain termination codons UGA and UAA. The polypeptide is Peptide chain release factor 2 (Chlamydia trachomatis serovar L2 (strain ATCC VR-902B / DSM 19102 / 434/Bu)).